The following is a 157-amino-acid chain: Small ribosomal subunit protein uS7 (157 aa).

Belongs to the universal ribosomal protein uS7 family. In terms of assembly, part of the 30S ribosomal subunit. Contacts proteins S9 and S11.

Its function is as follows. One of the primary rRNA binding proteins, it binds directly to 16S rRNA where it nucleates assembly of the head domain of the 30S subunit. Is located at the subunit interface close to the decoding center, probably blocks exit of the E-site tRNA. This chain is Small ribosomal subunit protein uS7, found in Phenylobacterium zucineum (strain HLK1).